The chain runs to 815 residues: 1,4-alpha-glucan branching enzyme GlgB (815 aa).

The active-site Nucleophile is aspartate 405. The active-site Proton donor is glutamate 458.

Belongs to the glycosyl hydrolase 13 family. GlgB subfamily. In terms of assembly, monomer.

It catalyses the reaction Transfers a segment of a (1-&gt;4)-alpha-D-glucan chain to a primary hydroxy group in a similar glucan chain.. Its pathway is glycan biosynthesis; glycogen biosynthesis. Its function is as follows. Catalyzes the formation of the alpha-1,6-glucosidic linkages in glycogen by scission of a 1,4-alpha-linked oligosaccharide from growing alpha-1,4-glucan chains and the subsequent attachment of the oligosaccharide to the alpha-1,6 position. The sequence is that of 1,4-alpha-glucan branching enzyme GlgB from Histophilus somni (strain 2336) (Haemophilus somnus).